A 450-amino-acid chain; its full sequence is uncharacterized protein (450 aa).

The residue at position 283 (Lys283) is an N6-(pyridoxal phosphate)lysine.

The protein belongs to the class-III pyridoxal-phosphate-dependent aminotransferase family. Pyridoxal 5'-phosphate serves as cofactor.

Essential for glycerol catabolism. This is an uncharacterized protein from Bacillus subtilis (strain 168).